The sequence spans 307 residues: Auxin-induced protein PCNT115 (307 aa).

Catalysis depends on Tyr64, which acts as the Proton donor. His136 provides a ligand contact to substrate. Residue 215–225 (SPLGRGFLSSG) coordinates NADP(+).

Belongs to the aldo/keto reductase family. Aldo/keto reductase 2 subfamily.

The protein is Auxin-induced protein PCNT115 of Nicotiana tabacum (Common tobacco).